The sequence spans 260 residues: Imidazole glycerol phosphate synthase subunit HisF (260 aa).

Residues Asp11 and Asp130 contribute to the active site.

The protein belongs to the HisA/HisF family. Heterodimer of HisH and HisF.

The protein localises to the cytoplasm. The catalysed reaction is 5-[(5-phospho-1-deoxy-D-ribulos-1-ylimino)methylamino]-1-(5-phospho-beta-D-ribosyl)imidazole-4-carboxamide + L-glutamine = D-erythro-1-(imidazol-4-yl)glycerol 3-phosphate + 5-amino-1-(5-phospho-beta-D-ribosyl)imidazole-4-carboxamide + L-glutamate + H(+). Its pathway is amino-acid biosynthesis; L-histidine biosynthesis; L-histidine from 5-phospho-alpha-D-ribose 1-diphosphate: step 5/9. Functionally, IGPS catalyzes the conversion of PRFAR and glutamine to IGP, AICAR and glutamate. The HisF subunit catalyzes the cyclization activity that produces IGP and AICAR from PRFAR using the ammonia provided by the HisH subunit. This is Imidazole glycerol phosphate synthase subunit HisF from Caulobacter sp. (strain K31).